A 481-amino-acid chain; its full sequence is Argininosuccinate lyase (481 aa).

This sequence belongs to the lyase 1 family. Argininosuccinate lyase subfamily.

The protein localises to the cytoplasm. The catalysed reaction is 2-(N(omega)-L-arginino)succinate = fumarate + L-arginine. It participates in amino-acid biosynthesis; L-arginine biosynthesis; L-arginine from L-ornithine and carbamoyl phosphate: step 3/3. The polypeptide is Argininosuccinate lyase (Methanococcus maripaludis (strain C6 / ATCC BAA-1332)).